A 77-amino-acid chain; its full sequence is NAD(P)H-quinone oxidoreductase subunit L (77 aa).

A run of 2 helical transmembrane segments spans residues 12–32 and 47–67; these read FVAYVGIISIYLFVIPLILFY and LGVYGLVFLFFPGLILFSPFL.

It belongs to the complex I NdhL subunit family. In terms of assembly, NDH-1 can be composed of about 15 different subunits; different subcomplexes with different compositions have been identified which probably have different functions.

The protein resides in the cellular thylakoid membrane. It catalyses the reaction a plastoquinone + NADH + (n+1) H(+)(in) = a plastoquinol + NAD(+) + n H(+)(out). The enzyme catalyses a plastoquinone + NADPH + (n+1) H(+)(in) = a plastoquinol + NADP(+) + n H(+)(out). Functionally, NDH-1 shuttles electrons from an unknown electron donor, via FMN and iron-sulfur (Fe-S) centers, to quinones in the respiratory and/or the photosynthetic chain. The immediate electron acceptor for the enzyme in this species is believed to be plastoquinone. Couples the redox reaction to proton translocation, and thus conserves the redox energy in a proton gradient. Cyanobacterial NDH-1 also plays a role in inorganic carbon-concentration. The protein is NAD(P)H-quinone oxidoreductase subunit L of Prochlorococcus marinus (strain MIT 9515).